A 1753-amino-acid polypeptide reads, in one-letter code: Negative regulator of sporulation PMD1 (1753 aa).

Kelch repeat units follow at residues 143 to 198 and 206 to 253; these read NIYI…VLNE and KLII…KILV. Thr298 bears the Phosphothreonine mark. Over residues 651–664 the composition is skewed to polar residues; it reads TTKFGNSSQSSNGS. Disordered stretches follow at residues 651-753 and 771-807; these read TTKF…TTCS and LGLS…CTLS. The span at 670–683 shows a compositional bias: low complexity; it reads SKNGNSKSNSNTSL. Composition is skewed to polar residues over residues 690–699, 740–753, 774–783, and 797–807; these read DFTSSTSSPK, TGTS…TTCS, SEQSGRSTRA, and NDGNDSNCTLS. Ser838 is subject to Phosphoserine. 3 disordered regions span residues 875–915, 938–957, and 962–988; these read IASP…LGSS, PLEP…SSLA, and FGRD…ARRI. Over residues 880 to 900 the composition is skewed to low complexity; that stretch reads QSRQTSFASTASTASVVSSTS. A compositionally biased stretch (pro residues) spans 938–947; it reads PLEPLPPVPK. Low complexity predominate over residues 979 to 988; it reads KSSSSDARRI. 3 positions are modified to phosphoserine: Ser1289, Ser1307, and Ser1356. Disordered stretches follow at residues 1312–1467, 1604–1686, and 1706–1753; these read SPAT…DLDS, PIFA…NKRF, and SAVN…GKRR. A compositionally biased stretch (polar residues) spans 1344 to 1379; the sequence is VSRQQNFPRRSSSFTETVPTEPTRYNYQNLDSSKSN. Positions 1399 to 1430 are enriched in basic and acidic residues; it reads NFDKYKVETLQKRNSNDGKDLDRTNDPLKNRG. A compositionally biased stretch (polar residues) spans 1653–1677; that stretch reads IKFSQAPSTQISPRTSVTDFTASQQ. Ser1664 bears the Phosphoserine mark. Basic and acidic residues predominate over residues 1711 to 1723; sequence GRKESEGHCEDRS.

The protein localises to the cytoplasm. In terms of biological role, negatively regulates early sporulation-specific genes. Seems to exert its function by positively regulating the Ras/cAMP pathway. Required for growth under alkaline conditions. Acts synergetically with MDS3. This chain is Negative regulator of sporulation PMD1 (PMD1), found in Saccharomyces cerevisiae (strain ATCC 204508 / S288c) (Baker's yeast).